We begin with the raw amino-acid sequence, 512 residues long: Maturase K (512 aa).

It belongs to the intron maturase 2 family. MatK subfamily.

It localises to the plastid. The protein localises to the chloroplast. Its function is as follows. Usually encoded in the trnK tRNA gene intron. Probably assists in splicing its own and other chloroplast group II introns. The sequence is that of Maturase K from Piper cenocladum (Ant piper).